The following is a 335-amino-acid chain: Glyceraldehyde-3-phosphate dehydrogenase (335 aa).

Residues 12-13 (RI), Asp-34, and Lys-79 each bind NAD(+). D-glyceraldehyde 3-phosphate contacts are provided by residues 150-152 (SCT), Thr-181, 210-211 (TG), and Arg-233. Residue Cys-151 is the Nucleophile of the active site. Asn-315 is a binding site for NAD(+).

This sequence belongs to the glyceraldehyde-3-phosphate dehydrogenase family. As to quaternary structure, homotetramer.

Its subcellular location is the cytoplasm. It carries out the reaction D-glyceraldehyde 3-phosphate + phosphate + NAD(+) = (2R)-3-phospho-glyceroyl phosphate + NADH + H(+). The protein operates within carbohydrate degradation; glycolysis; pyruvate from D-glyceraldehyde 3-phosphate: step 1/5. This chain is Glyceraldehyde-3-phosphate dehydrogenase (GPD), found in Debaryomyces hansenii (strain ATCC 36239 / CBS 767 / BCRC 21394 / JCM 1990 / NBRC 0083 / IGC 2968) (Yeast).